A 381-amino-acid chain; its full sequence is Queuine tRNA-ribosyltransferase (381 aa).

Aspartate 96 serves as the catalytic Proton acceptor. Substrate is bound by residues 96-100, aspartate 150, glutamine 193, and glycine 220; that span reads DSGGF. An RNA binding region spans residues 251–257; that stretch reads GVGAPDS. Aspartate 270 functions as the Nucleophile in the catalytic mechanism. Residues 275–279 are RNA binding; important for wobble base 34 recognition; that stretch reads TRIAR. Positions 308, 310, 313, and 339 each coordinate Zn(2+).

Belongs to the queuine tRNA-ribosyltransferase family. Homodimer. Within each dimer, one monomer is responsible for RNA recognition and catalysis, while the other monomer binds to the replacement base PreQ1. The cofactor is Zn(2+).

The catalysed reaction is 7-aminomethyl-7-carbaguanine + guanosine(34) in tRNA = 7-aminomethyl-7-carbaguanosine(34) in tRNA + guanine. It functions in the pathway tRNA modification; tRNA-queuosine biosynthesis. Catalyzes the base-exchange of a guanine (G) residue with the queuine precursor 7-aminomethyl-7-deazaguanine (PreQ1) at position 34 (anticodon wobble position) in tRNAs with GU(N) anticodons (tRNA-Asp, -Asn, -His and -Tyr). Catalysis occurs through a double-displacement mechanism. The nucleophile active site attacks the C1' of nucleotide 34 to detach the guanine base from the RNA, forming a covalent enzyme-RNA intermediate. The proton acceptor active site deprotonates the incoming PreQ1, allowing a nucleophilic attack on the C1' of the ribose to form the product. After dissociation, two additional enzymatic reactions on the tRNA convert PreQ1 to queuine (Q), resulting in the hypermodified nucleoside queuosine (7-(((4,5-cis-dihydroxy-2-cyclopenten-1-yl)amino)methyl)-7-deazaguanosine). In Enterococcus faecalis (strain ATCC 700802 / V583), this protein is Queuine tRNA-ribosyltransferase.